The chain runs to 751 residues: Photosystem I P700 chlorophyll a apoprotein A1 (751 aa).

A run of 8 helical transmembrane segments spans residues 73–96 (VFSA…FHGA), 159–182 (LYIT…FHYH), 198–222 (LNHH…HVSL), 294–312 (VAHH…GHMY), 349–372 (WHAQ…QHMY), 388–414 (LSLF…IFMV), 436–458 (AIIS…LYIH), and 533–551 (FLVH…LILL). [4Fe-4S] cluster-binding residues include C575 and C584. 2 helical membrane passes run 591–612 (HVFL…HFSW) and 665–687 (LSAY…MFLF). H676 contributes to the chlorophyll a' binding site. The chlorophyll a site is built by M684 and Y692. Phylloquinone is bound at residue W693. Residues 725–745 (AVGVAHYLLGGIATTWSFFLA) form a helical membrane-spanning segment.

It belongs to the PsaA/PsaB family. In terms of assembly, the PsaA/B heterodimer binds the P700 chlorophyll special pair and subsequent electron acceptors. PSI consists of a core antenna complex that captures photons, and an electron transfer chain that converts photonic excitation into a charge separation. The eukaryotic PSI reaction center is composed of at least 11 subunits. It depends on P700 is a chlorophyll a/chlorophyll a' dimer, A0 is one or more chlorophyll a, A1 is one or both phylloquinones and FX is a shared 4Fe-4S iron-sulfur center. as a cofactor.

It is found in the plastid. The protein resides in the chloroplast thylakoid membrane. The catalysed reaction is reduced [plastocyanin] + hnu + oxidized [2Fe-2S]-[ferredoxin] = oxidized [plastocyanin] + reduced [2Fe-2S]-[ferredoxin]. In terms of biological role, psaA and PsaB bind P700, the primary electron donor of photosystem I (PSI), as well as the electron acceptors A0, A1 and FX. PSI is a plastocyanin/cytochrome c6-ferredoxin oxidoreductase, converting photonic excitation into a charge separation, which transfers an electron from the donor P700 chlorophyll pair to the spectroscopically characterized acceptors A0, A1, FX, FA and FB in turn. Oxidized P700 is reduced on the lumenal side of the thylakoid membrane by plastocyanin or cytochrome c6. The sequence is that of Photosystem I P700 chlorophyll a apoprotein A1 from Euglena gracilis.